The sequence spans 523 residues: 2-hydroxyisoflavanone synthase (523 aa).

Residues 2–22 traverse the membrane as a helical segment; the sequence is LVELAITLLVIALFIHLRPTP. Cysteine 450 serves as a coordination point for heme.

Belongs to the cytochrome P450 family. It depends on heme as a cofactor.

Its subcellular location is the microsome membrane. The catalysed reaction is (2S)-liquiritigenin + reduced [NADPH--hemoprotein reductase] + O2 = (2R,3S)-2,4',7-trihydroxyisoflavanone + oxidized [NADPH--hemoprotein reductase] + H2O + H(+). It catalyses the reaction (2S)-naringenin + reduced [NADPH--hemoprotein reductase] + O2 = 2-hydroxy-2,3-dihydrogenistein + oxidized [NADPH--hemoprotein reductase] + H2O + H(+). 2-hydroxyisoflavanone synthase, which catalyzes the hydroxylation associated with 1,2-aryl migration of flavanones. Converts liquiritigenin and naringenin into highly unstable precursors of the isoflavones daidzein and genistein. The chain is 2-hydroxyisoflavanone synthase (CYP93C2) from Glycyrrhiza uralensis (Chinese licorice).